A 187-amino-acid chain; its full sequence is Ribosome maturation factor RimP (187 aa).

It belongs to the RimP family.

The protein localises to the cytoplasm. Required for maturation of 30S ribosomal subunits. The sequence is that of Ribosome maturation factor RimP from Phenylobacterium zucineum (strain HLK1).